The chain runs to 286 residues: Ribosome-inactivating protein beta-momorcharin (286 aa).

Positions 1-23 (MVKCLLLSFLIIAIFIGVPTAKG) are cleaved as a signal peptide. Asparagine 74 carries N-linked (GlcNAc...) asparagine glycosylation. Active-site residues include tyrosine 93, tyrosine 132, glutamate 181, and arginine 184.

It belongs to the ribosome-inactivating protein family. Type 1 RIP subfamily. Bound to a branched hexasaccharide.

The enzyme catalyses Endohydrolysis of the N-glycosidic bond at one specific adenosine on the 28S rRNA.. Functionally, irreversibly relaxes supercoiled DNA and catalyzes double-stranded breakage. Also acts as a ribosome inactivating protein. This Momordica charantia (Bitter gourd) protein is Ribosome-inactivating protein beta-momorcharin (MAP30).